The chain runs to 340 residues: Glyceraldehyde-3-phosphate dehydrogenase (340 aa).

NAD(+) is bound by residues 11–12 and glycine 109; that span reads TI. Residue 138 to 140 participates in D-glyceraldehyde 3-phosphate binding; it reads SCN. Cysteine 139 (nucleophile) is an active-site residue. Position 167 (arginine 167) interacts with NAD(+). 193–194 contacts D-glyceraldehyde 3-phosphate; sequence HA. Glutamine 300 contacts NAD(+).

This sequence belongs to the glyceraldehyde-3-phosphate dehydrogenase family. Homotetramer.

The protein localises to the cytoplasm. The enzyme catalyses D-glyceraldehyde 3-phosphate + phosphate + NADP(+) = (2R)-3-phospho-glyceroyl phosphate + NADPH + H(+). It carries out the reaction D-glyceraldehyde 3-phosphate + phosphate + NAD(+) = (2R)-3-phospho-glyceroyl phosphate + NADH + H(+). Its pathway is carbohydrate degradation; glycolysis; pyruvate from D-glyceraldehyde 3-phosphate: step 1/5. The protein is Glyceraldehyde-3-phosphate dehydrogenase of Saccharolobus islandicus (strain M.14.25 / Kamchatka #1) (Sulfolobus islandicus).